The following is an 895-amino-acid chain: Catenin alpha-3 (895 aa).

A Phosphoserine modification is found at Ser56. Residues 74–111 (EKIAQEATVLKDELTASLEEVRKESEALKVSAERFTDD) are a coiled coil. Residue Ser160 is modified to Phosphoserine. Residues 325 to 379 (RERIIAECNAIRQALQDLLSEYMNNAGKKERSNTLNIALDNMCKKTRDLRRQLRK) adopt a coiled-coil conformation. Ser637 and Ser647 each carry phosphoserine. At Thr649 the chain carries Phosphothreonine.

It belongs to the vinculin/alpha-catenin family. In terms of assembly, interacts with CTNNB1. Interacts with PKP2. In terms of tissue distribution, predominantly expressed in heart and testis. Expressed at lower levels in brain, kidney, liver and skeletal muscle.

The protein localises to the cytoplasm. Its subcellular location is the cytoskeleton. It is found in the cell junction. It localises to the desmosome. In terms of biological role, may be involved in formation of stretch-resistant cell-cell adhesion complexes. This is Catenin alpha-3 from Homo sapiens (Human).